The primary structure comprises 113 residues: Translation initiation factor IF-1, chloroplastic (113 aa).

Residues 8–83 (REKKNPREAK…SKGRIIYRLP (76 aa)) enclose the S1-like domain. The segment at 86–113 (DSKRIEDSKDSEDLKDSEDLKDTKDSKD) is disordered.

It belongs to the IF-1 family. As to quaternary structure, component of the 30S ribosomal translation pre-initiation complex which assembles on the 30S ribosome in the order IF-2 and IF-3, IF-1 and N-formylmethionyl-tRNA(fMet); mRNA recruitment can occur at any time during PIC assembly.

It localises to the plastid. The protein resides in the chloroplast. Functionally, one of the essential components for the initiation of protein synthesis. Stabilizes the binding of IF-2 and IF-3 on the 30S subunit to which N-formylmethionyl-tRNA(fMet) subsequently binds. Helps modulate mRNA selection, yielding the 30S pre-initiation complex (PIC). Upon addition of the 50S ribosomal subunit IF-1, IF-2 and IF-3 are released leaving the mature 70S translation initiation complex. The chain is Translation initiation factor IF-1, chloroplastic from Hordeum vulgare (Barley).